The sequence spans 267 residues: Kallikrein-14 (267 aa).

An N-terminal signal peptide occupies residues 1 to 34; the sequence is MSLRVLGSGTWPSAPKMFLLLTALQVLAIAMTQS. Positions 35–40 are cleaved as a propeptide — activation peptide; the sequence is QEDENK. The region spanning 41 to 265 is the Peptidase S1 domain; it reads IIGGHTCTRS…YRSWIEETMR (225 aa). 5 disulfide bridges follow: Cys-47–Cys-180, Cys-68–Cys-84, Cys-159–Cys-226, Cys-191–Cys-205, and Cys-216–Cys-241. Active-site charge relay system residues include His-83 and Asp-127. Residue Ser-220 is the Charge relay system of the active site.

This sequence belongs to the peptidase S1 family. Kallikrein subfamily. In terms of processing, proteolytic cleavage of the activation peptide produces the active enzyme. In terms of tissue distribution, highly expressed in CNS, bone marrow and fetal liver. Also expressed in breast, thyroid, kidney, colon, pancreas, spleen, prostate, uterus, small intestine, placenta and skeletal muscle. Among 40 tissues tested, the highest expression is detected in skin followed by breast and prostate (at protein level). Expressed in stratum corneum by sweat ducts and sweat glands and detected in sweat (at protein level).

It is found in the secreted. The protein resides in the extracellular space. Inhibited by SERPINA1, SERPINC1, SERPINE1, SERPINF2, aprotinin, soybean, trypsin inhibitor and leupeptin. Inhibited by serine protease inhibitor SPINK5. Has an autoproteolytic activity which may have a regulatory effect. Activated by citrate and inhibited by zinc and to a lower extent by manganese. Its function is as follows. Serine-type endopeptidase with a dual trypsin-like and chymotrypsin-like substrate specificity. May activate/inactivate the proteinase-activated receptors F2R, F2RL1 and F2RL3 and other kallikreins including KLK1, KLK3, KLK5 and KLK11. May function in seminal clot liquefaction through direct cleavage of the semenogelin SEMG1 and SEMG2 and activation of KLK3. May function through desmoglein DSG1 cleavage in epidermal desquamation a process by which the most superficial corneocytes are shed from the skin surface. May be involved in several aspects of tumor progression including growth, invasion and angiogenesis. The chain is Kallikrein-14 (KLK14) from Homo sapiens (Human).